Consider the following 459-residue polypeptide: tRNA modification GTPase MnmE (459 aa).

(6S)-5-formyl-5,6,7,8-tetrahydrofolate contacts are provided by Arg20, Glu85, and Arg124. One can recognise a TrmE-type G domain in the interval 221–380; sequence GLSTVIIGRP…LEEAIQSLFY (160 aa). Asn231 provides a ligand contact to K(+). GTP is bound by residues 231 to 236, 250 to 256, and 275 to 278; these read NVGKSS, TDIPGTT, and DTAG. Ser235 provides a ligand contact to Mg(2+). Positions 250, 252, and 255 each coordinate K(+). Thr256 provides a ligand contact to Mg(2+). Residue Lys459 participates in (6S)-5-formyl-5,6,7,8-tetrahydrofolate binding.

This sequence belongs to the TRAFAC class TrmE-Era-EngA-EngB-Septin-like GTPase superfamily. TrmE GTPase family. Homodimer. Heterotetramer of two MnmE and two MnmG subunits. K(+) is required as a cofactor.

Its subcellular location is the cytoplasm. Its function is as follows. Exhibits a very high intrinsic GTPase hydrolysis rate. Involved in the addition of a carboxymethylaminomethyl (cmnm) group at the wobble position (U34) of certain tRNAs, forming tRNA-cmnm(5)s(2)U34. In Bacillus subtilis (strain 168), this protein is tRNA modification GTPase MnmE.